The sequence spans 206 residues: Imidazoleglycerol-phosphate dehydratase (206 aa).

The disordered stretch occupies residues 1–24 (MDPTASGRQAPRNPRQATVQRETK).

This sequence belongs to the imidazoleglycerol-phosphate dehydratase family.

Its subcellular location is the cytoplasm. It catalyses the reaction D-erythro-1-(imidazol-4-yl)glycerol 3-phosphate = 3-(imidazol-4-yl)-2-oxopropyl phosphate + H2O. It participates in amino-acid biosynthesis; L-histidine biosynthesis; L-histidine from 5-phospho-alpha-D-ribose 1-diphosphate: step 6/9. This chain is Imidazoleglycerol-phosphate dehydratase, found in Acidothermus cellulolyticus (strain ATCC 43068 / DSM 8971 / 11B).